Reading from the N-terminus, the 27-residue chain is Conotoxin as14a (27 aa).

Intrachain disulfides connect Cys6–Cys26 and Cys10–Cys22.

Belongs to the conotoxin L superfamily. In terms of tissue distribution, expressed by the venom duct.

The protein localises to the secreted. Functionally, in vivo, intracranial injection, elicits scratching and grooming activity in mice. The polypeptide is Conotoxin as14a (Conus cancellatus (Cancellate cone)).